We begin with the raw amino-acid sequence, 95 residues long: Large ribosomal subunit protein uL23 (95 aa).

The protein belongs to the universal ribosomal protein uL23 family. Part of the 50S ribosomal subunit. Contacts protein L29, and trigger factor when it is bound to the ribosome.

One of the early assembly proteins it binds 23S rRNA. One of the proteins that surrounds the polypeptide exit tunnel on the outside of the ribosome. Forms the main docking site for trigger factor binding to the ribosome. The polypeptide is Large ribosomal subunit protein uL23 (Solibacter usitatus (strain Ellin6076)).